A 345-amino-acid polypeptide reads, in one-letter code: uncharacterized protein (345 aa).

The protein resides in the plastid. It is found in the chloroplast. This is an uncharacterized protein from Chlamydomonas moewusii (Chlamydomonas eugametos).